The sequence spans 218 residues: uncharacterized protein (218 aa).

This is an uncharacterized protein from Caenorhabditis elegans.